Consider the following 427-residue polypeptide: Homoserine O-acetyltransferase FUB5 (427 aa).

A compositionally biased stretch (low complexity) spans 1–13 (MTTTTTAPALPTP). The interval 1 to 35 (MTTTTTAPALPTPIHDGLGNGTTYERSIPRPVNPF) is disordered. Positions 77–400 (NVMIICHALS…VSDDGHDAFL (324 aa)) constitute an AB hydrolase-1 domain. The active-site Nucleophile is the S175. The tract at residues 260–297 (RFGRDTGNKKKAKNKGSETLPSNSTPIHSQGGADETPV) is disordered. A compositionally biased stretch (polar residues) spans 276–287 (SETLPSNSTPIH). Catalysis depends on residues D367 and H396.

This sequence belongs to the AB hydrolase superfamily. MetX family.

The catalysed reaction is L-homoserine + acetyl-CoA = O-acetyl-L-homoserine + CoA. The protein operates within mycotoxin biosynthesis. Its function is as follows. Homoserine O-acetyltransferase; part of the gene cluster that mediates the biosynthesis of fusaric acid, a mycotoxin with low to moderate toxicity to animals and humans, but with high phytotoxic properties. L-aspartate is suggested as fusaric acid amino acid precursor that is activated and further processed to O-acetyl-L-homoserine by cluster enzymes aspartate kinase FUB3 and homoserine O-acetyltransferase FUB5, as well as enzymes of the primary metabolism. The polyketide synthase (PKS) FUB1 generates the triketide trans-2-hexenal which is presumptively released by the hydrolase FUB4 and linked to the NRPS-bound amino acid precursor by NAD(P)-dependent dehydrogenase FUB6. FUB1, FUB4, and the non-canonical NRPS Fub8 may form an enzyme complex. Further processing of the NRPS-bound intermediate might be carried out by FUB6 and the sulfhydrylase FUB7, enabling a spontaneous electrocyclization to close the carbon backbone of fusaric acid. Dihydrofusaric acid is likely to be released via reduction by the thioester reductase (TR) domain of FUB8 whereupon the final oxidation to fusaric acid may (also) be performed by the FMN-dependent dehydrogenase FUB9. The polypeptide is Homoserine O-acetyltransferase FUB5 (Gibberella fujikuroi (strain CBS 195.34 / IMI 58289 / NRRL A-6831) (Bakanae and foot rot disease fungus)).